Consider the following 303-residue polypeptide: ADP-ribosyl cyclase/cyclic ADP-ribose hydrolase 1 (303 aa).

Residues 1–21 (MANYEFSQVSEDRPGCRLTRK) lie on the Cytoplasmic side of the membrane. Residues 22 to 44 (AQIGLGVGLLLLVALVVVVVIVL) traverse the membrane as a helical; Signal-anchor for type II membrane protein segment. Over 45–303 (WPRSPLVWKG…PEHPSCRLNV (259 aa)) the chain is Extracellular. 3 cysteine pairs are disulfide-bonded: C69-C85, C102-C183, and C163-C176. N103 carries N-linked (GlcNAc...) asparagine glycosylation. The active site involves C122. N-linked (GlcNAc...) asparagine glycosylation is present at N123. C204 is an active-site residue. N-linked (GlcNAc...) asparagine glycosylation is found at N212 and N222. 2 disulfide bridges follow: C257–C278 and C290–C299.

The protein belongs to the ADP-ribosyl cyclase family. In terms of assembly, homodimer. As to expression, spleen, liver, heart, thymus, thyroid gland, ileum, colon, cerebellum, salivary gland, adrenal gland, jejunum, islets of Langerhans and osteoclasts.

It is found in the cell membrane. The enzyme catalyses NAD(+) = cyclic ADP-beta-D-ribose + nicotinamide + H(+). It catalyses the reaction nicotinate + NADP(+) = nicotinate-adenine dinucleotide phosphate + nicotinamide. The catalysed reaction is NAD(+) + H2O = ADP-D-ribose + nicotinamide + H(+). Both NAADP and cADPR synthesis are inhibited by nicotinic acid. In terms of biological role, synthesizes the second messengers cyclic ADP-ribose and nicotinate-adenine dinucleotide phosphate, the former a second messenger for glucose-induced insulin secretion, the latter a Ca(2+) mobilizer. Also has cADPR hydrolase activity. Its function is as follows. Regulates osteoclastic bone resorption, probably via production of cyclic ADP-ribose and triggering of a cytosolic calcium ion signal through ryanodine receptor activation. The protein is ADP-ribosyl cyclase/cyclic ADP-ribose hydrolase 1 (Cd38) of Rattus norvegicus (Rat).